Consider the following 346-residue polypeptide: Thioredoxin domain-containing protein R362 (346 aa).

Positions 212–345 (LTNLSNTEAN…IVKFIDETMS (134 aa)) constitute a Thioredoxin domain.

The protein resides in the virion. This Acanthamoeba polyphaga (Amoeba) protein is Thioredoxin domain-containing protein R362.